Here is a 356-residue protein sequence, read N- to C-terminus: Holliday junction branch migration complex subunit RuvB (356 aa).

Positions 4–192 (DDTTDATADE…FGFTAHMEFY (189 aa)) are large ATPase domain (RuvB-L). Residues leucine 31, arginine 32, glycine 73, lysine 76, threonine 77, threonine 78, 139–141 (EDF), arginine 182, tyrosine 192, and arginine 229 contribute to the ATP site. Residue threonine 77 coordinates Mg(2+). A small ATPAse domain (RuvB-S) region spans residues 193 to 263 (EPHELERVIH…IAAAALKVYE (71 aa)). A head domain (RuvB-H) region spans residues 266–356 (ARGLDRLDRG…GNGQGDLFGA (91 aa)). 3 residues coordinate DNA: arginine 302, arginine 321, and arginine 326.

It belongs to the RuvB family. Homohexamer. Forms an RuvA(8)-RuvB(12)-Holliday junction (HJ) complex. HJ DNA is sandwiched between 2 RuvA tetramers; dsDNA enters through RuvA and exits via RuvB. An RuvB hexamer assembles on each DNA strand where it exits the tetramer. Each RuvB hexamer is contacted by two RuvA subunits (via domain III) on 2 adjacent RuvB subunits; this complex drives branch migration. In the full resolvosome a probable DNA-RuvA(4)-RuvB(12)-RuvC(2) complex forms which resolves the HJ.

It is found in the cytoplasm. The enzyme catalyses ATP + H2O = ADP + phosphate + H(+). Its function is as follows. The RuvA-RuvB-RuvC complex processes Holliday junction (HJ) DNA during genetic recombination and DNA repair, while the RuvA-RuvB complex plays an important role in the rescue of blocked DNA replication forks via replication fork reversal (RFR). RuvA specifically binds to HJ cruciform DNA, conferring on it an open structure. The RuvB hexamer acts as an ATP-dependent pump, pulling dsDNA into and through the RuvAB complex. RuvB forms 2 homohexamers on either side of HJ DNA bound by 1 or 2 RuvA tetramers; 4 subunits per hexamer contact DNA at a time. Coordinated motions by a converter formed by DNA-disengaged RuvB subunits stimulates ATP hydrolysis and nucleotide exchange. Immobilization of the converter enables RuvB to convert the ATP-contained energy into a lever motion, pulling 2 nucleotides of DNA out of the RuvA tetramer per ATP hydrolyzed, thus driving DNA branch migration. The RuvB motors rotate together with the DNA substrate, which together with the progressing nucleotide cycle form the mechanistic basis for DNA recombination by continuous HJ branch migration. Branch migration allows RuvC to scan DNA until it finds its consensus sequence, where it cleaves and resolves cruciform DNA. In Streptomyces avermitilis (strain ATCC 31267 / DSM 46492 / JCM 5070 / NBRC 14893 / NCIMB 12804 / NRRL 8165 / MA-4680), this protein is Holliday junction branch migration complex subunit RuvB.